The chain runs to 166 residues: Interferon gamma (166 aa).

Positions 1-23 (MKYTSYFLALQLCLLLGFSGSYG) are cleaved as a signal peptide. Glutamine 24 is subject to Pyrrolidone carboxylic acid. 2 N-linked (GlcNAc...) asparagine glycosylation sites follow: asparagine 39 and asparagine 106.

It belongs to the type II (or gamma) interferon family. Homodimer. Interacts with IFNGR1 (via extracellular domain); this interaction promotes IFNGR1 dimerization. As to expression, released primarily from activated T lymphocytes.

Its subcellular location is the secreted. Type II interferon produced by immune cells such as T-cells and NK cells that plays crucial roles in antimicrobial, antiviral, and antitumor responses by activating effector immune cells and enhancing antigen presentation. Primarily signals through the JAK-STAT pathway after interaction with its receptor IFNGR1 to affect gene regulation. Upon IFNG binding, IFNGR1 intracellular domain opens out to allow association of downstream signaling components JAK2, JAK1 and STAT1, leading to STAT1 activation, nuclear translocation and transcription of IFNG-regulated genes. Many of the induced genes are transcription factors such as IRF1 that are able to further drive regulation of a next wave of transcription. Plays a role in class I antigen presentation pathway by inducing a replacement of catalytic proteasome subunits with immunoproteasome subunits. In turn, increases the quantity, quality, and repertoire of peptides for class I MHC loading. Increases the efficiency of peptide generation also by inducing the expression of activator PA28 that associates with the proteasome and alters its proteolytic cleavage preference. Up-regulates as well MHC II complexes on the cell surface by promoting expression of several key molecules such as cathepsins B/CTSB, H/CTSH, and L/CTSL. Participates in the regulation of hematopoietic stem cells during development and under homeostatic conditions by affecting their development, quiescence, and differentiation. The sequence is that of Interferon gamma (IFNG) from Moschus berezovskii (Chinese forest musk deer).